A 1059-amino-acid chain; its full sequence is MEPTVADVHLVPRTTKEVPALDAACCRAASIGVVATSLVVLTLGVLLAFLSTQGFHVDHTAELRGIRWTSSLRRETSDYHRTLTPTLEALLHFLLRPLQTLSLGLEEELLQRGIRARLREHGISLAAYGTIVSAELTGRHKGPLAERDFKSGRCPGNSFSCGNSQCVTKVNPECDDQEDCSDGSDEAHCECGLQPAWRMAGRIVGGMEASPGEFPWQASLRENKEHFCGAAIINARWLVSAAHCFNEFQDPTKWVAYVGATYLSGSEASTVRAQVVQIVKHPLYNADTADFDVAVLELTSPLPFGRHIQPVCLPAATHIFPPSKKCLISGWGYLKEDFLVKPEVLQKATVELLDQALCASLYGHSLTDRMVCAGYLDGKVDSCQGDSGGPLVCEEPSGRFFLAGIVSWGIGCAEARRPGVYARVTRLRDWILEATTKASMPLAPTMAPAPAAPSTAWPTSPESPVVSTPTKSMQALSTVPLDWVTVPKLQECGARPAMEKPTRVVGGFGAASGEVPWQVSLKEGSRHFCGATVVGDRWLLSAAHCFNHTKVEQVRAHLGTASLLGLGGSPVKIGLRRVVLHPLYNPGILDFDLAVLELASPLAFNKYIQPVCLPLAIQKFPVGRKCMISGWGNTQEGNATKPELLQKASVGIIDQKTCSVLYNFSLTDRMICAGFLEGKVDSCQGDSGGPLACEEAPGVFYLAGIVSWGIGCAQVKKPGVYTRITRLKGWILEIMSSQPLPMSPPSTTRMLATTSPRTTAGLTVPGATPSRPTPGAASRVTGQPANSTLSAVSTTARGQTPFPDAPEATTHTQLPDCGLAPAALTRIVGGSAAGRGEWPWQVSLWLRRREHRCGAVLVAERWLLSAAHCFDVYGDPKQWAAFLGTPFLSGAEGQLERVARIYKHPFYNLYTLDYDVALLELAGPVRRSRLVRPICLPEPAPRPPDGTRCVITGWGSVREGGSMARQLQKAAVRLLSEQTCRRFYPVQISSRMLCAGFPQGGVDSCSGDAGGPLACREPSGRWVLTGVTSWGYGCGRPHFPGVYTRVAAVRGWIGQHIQE.

The Cytoplasmic segment spans residues 1 to 29; sequence MEPTVADVHLVPRTTKEVPALDAACCRAA. Residues 30 to 50 form a helical; Signal-anchor for type II membrane protein membrane-spanning segment; it reads SIGVVATSLVVLTLGVLLAFL. The Extracellular portion of the chain corresponds to 51-1059; that stretch reads STQGFHVDHT…RGWIGQHIQE (1009 aa). One can recognise an LDL-receptor class A domain in the interval 153–190; sequence RCPGNSFSCGNSQCVTKVNPECDDQEDCSDGSDEAHCE. Intrachain disulfides connect cysteine 154/cysteine 166, cysteine 161/cysteine 180, cysteine 174/cysteine 189, and cysteine 228/cysteine 244. The Peptidase S1 1 domain maps to 203–436; sequence IVGGMEASPG…LRDWILEATT (234 aa). Residues histidine 243 and aspartate 292 each act as charge relay system in the active site. Intrachain disulfides connect cysteine 326–cysteine 393, cysteine 358–cysteine 372, and cysteine 383–cysteine 412. The Charge relay system role is filled by serine 387. Residues 443–469 are disordered; the sequence is APTMAPAPAAPSTAWPTSPESPVVSTP. The region spanning 504-736 is the Peptidase S1 2 domain; that stretch reads VVGGFGAASG…LKGWILEIMS (233 aa). A disulfide bridge connects residues cysteine 529 and cysteine 545. Residue histidine 544 is the Charge relay system of the active site. An N-linked (GlcNAc...) asparagine glycan is attached at asparagine 547. The active-site Charge relay system is the aspartate 592. Intrachain disulfides connect cysteine 626-cysteine 693, cysteine 658-cysteine 672, and cysteine 683-cysteine 712. N-linked (GlcNAc...) asparagine glycans are attached at residues asparagine 638 and asparagine 663. Catalysis depends on serine 687, which acts as the Charge relay system. Residues 758–814 are disordered; it reads TTAGLTVPGATPSRPTPGAASRVTGQPANSTLSAVSTTARGQTPFPDAPEATTHTQL. Residues 780-798 show a composition bias toward polar residues; it reads VTGQPANSTLSAVSTTARG. The N-linked (GlcNAc...) asparagine glycan is linked to asparagine 786. The 232-residue stretch at 827 to 1058 folds into the Peptidase S1 3 domain; that stretch reads IVGGSAAGRG…VRGWIGQHIQ (232 aa). Disulfide bonds link cysteine 853/cysteine 869, cysteine 949/cysteine 1015, cysteine 980/cysteine 994, and cysteine 1005/cysteine 1034.

The protein belongs to the peptidase S1 family. In terms of processing, proteolytically cleaved to generate 3 independent serine protease chains. The cleaved chains may remain attached to the membrane thanks to disulfide bonds. It is unclear whether cleavage always takes place. As to expression, expressed in fetal human tissues, such as kidney, liver, lung and brain, and in a variety of tumor cell lines. Weakly expressed in adult tissues including skeletal muscle, liver, placenta and heart.

Its subcellular location is the cell membrane. Its activity is regulated as follows. Inhibited by serine protease inhibitors PMSF and 4-(2-aminoethyl)benzenesulfonyl fluoride, but not by EDTA. Its function is as follows. Serase-1 and serase-2 are serine proteases that hydrolyze the peptides N-t-Boc-Gln-Ala-Arg-AMC and N-t-Boc-Gln-Gly-Arg-AMC. In contrast, N-t-Boc-Ala-Phe-Lys-AMC and N-t-Boc-Ala-Pro-Ala-AMC are not significantly hydrolyzed. The protein is Transmembrane protease serine 9 (TMPRSS9) of Homo sapiens (Human).